The chain runs to 631 residues: Phosphomethylpyrimidine synthase (631 aa).

Substrate-binding positions include Asn239, Met268, Tyr297, His333, 353-355, 394-397, and Glu433; these read SRG and DGLR. His437 is a Zn(2+) binding site. A substrate-binding site is contributed by Tyr460. Position 501 (His501) interacts with Zn(2+). Cys581, Cys584, and Cys589 together coordinate [4Fe-4S] cluster.

This sequence belongs to the ThiC family. Homodimer. Requires [4Fe-4S] cluster as cofactor.

It catalyses the reaction 5-amino-1-(5-phospho-beta-D-ribosyl)imidazole + S-adenosyl-L-methionine = 4-amino-2-methyl-5-(phosphooxymethyl)pyrimidine + CO + 5'-deoxyadenosine + formate + L-methionine + 3 H(+). The protein operates within cofactor biosynthesis; thiamine diphosphate biosynthesis. Catalyzes the synthesis of the hydroxymethylpyrimidine phosphate (HMP-P) moiety of thiamine from aminoimidazole ribotide (AIR) in a radical S-adenosyl-L-methionine (SAM)-dependent reaction. This is Phosphomethylpyrimidine synthase from Escherichia coli (strain SMS-3-5 / SECEC).